The chain runs to 92 residues: Small cysteine and glycine repeat-containing protein 9 (92 aa).

The interval 4–72 (CGCGSCGCSG…CCRRTCSSCG (69 aa)) is 11 X 2 AA repeats of CG.

It belongs to the KRTAP type 28 family.

Functionally, in the hair cortex, hair keratin intermediate filaments are embedded in an interfilamentous matrix, consisting of hair keratin-associated proteins (KRTAP), which are essential for the formation of a rigid and resistant hair shaft through their extensive disulfide bond cross-linking with abundant cysteine residues of hair keratins. The matrix proteins include the high-sulfur and high-glycine-tyrosine keratins. The chain is Small cysteine and glycine repeat-containing protein 9 from Homo sapiens (Human).